Here is a 222-residue protein sequence, read N- to C-terminus: 2-C-methyl-D-erythritol 4-phosphate cytidylyltransferase (222 aa).

This sequence belongs to the IspD/TarI cytidylyltransferase family. IspD subfamily.

It catalyses the reaction 2-C-methyl-D-erythritol 4-phosphate + CTP + H(+) = 4-CDP-2-C-methyl-D-erythritol + diphosphate. It functions in the pathway isoprenoid biosynthesis; isopentenyl diphosphate biosynthesis via DXP pathway; isopentenyl diphosphate from 1-deoxy-D-xylulose 5-phosphate: step 2/6. Its function is as follows. Catalyzes the formation of 4-diphosphocytidyl-2-C-methyl-D-erythritol from CTP and 2-C-methyl-D-erythritol 4-phosphate (MEP). The polypeptide is 2-C-methyl-D-erythritol 4-phosphate cytidylyltransferase (Porphyromonas gingivalis (strain ATCC BAA-308 / W83)).